Consider the following 663-residue polypeptide: Oligopeptide-binding protein SarA (663 aa).

The first 22 residues, methionine 1 to alanine 22, serve as a signal peptide directing secretion. Cysteine 23 carries N-palmitoyl cysteine lipidation. Cysteine 23 carries S-diacylglycerol cysteine lipidation. Residues glutamine 637–lysine 663 are disordered.

This sequence belongs to the bacterial solute-binding protein 5 family.

It localises to the cell membrane. In terms of biological role, may be involved in the expression of cell surface properties important for colonization of the human oral cavity. It may also be involved in uptake processes. This is Oligopeptide-binding protein SarA (sarA) from Streptococcus gordonii (strain Challis / ATCC 35105 / BCRC 15272 / CH1 / DL1 / V288).